The sequence spans 672 residues: DNA ligase (672 aa).

Residues aspartate 32 to aspartate 36, serine 81 to leucine 82, and glutamate 114 each bind NAD(+). Residue lysine 116 is the N6-AMP-lysine intermediate of the active site. Arginine 137, glutamate 174, lysine 291, and lysine 315 together coordinate NAD(+). Zn(2+)-binding residues include cysteine 409, cysteine 412, cysteine 427, and cysteine 433. The region spanning valine 592–serine 672 is the BRCT domain.

It belongs to the NAD-dependent DNA ligase family. LigA subfamily. The cofactor is Mg(2+). Requires Mn(2+) as cofactor.

It carries out the reaction NAD(+) + (deoxyribonucleotide)n-3'-hydroxyl + 5'-phospho-(deoxyribonucleotide)m = (deoxyribonucleotide)n+m + AMP + beta-nicotinamide D-nucleotide.. Functionally, DNA ligase that catalyzes the formation of phosphodiester linkages between 5'-phosphoryl and 3'-hydroxyl groups in double-stranded DNA using NAD as a coenzyme and as the energy source for the reaction. It is essential for DNA replication and repair of damaged DNA. The chain is DNA ligase from Actinobacillus succinogenes (strain ATCC 55618 / DSM 22257 / CCUG 43843 / 130Z).